The primary structure comprises 671 residues: Alpha-1,4-glucan:maltose-1-phosphate maltosyltransferase (671 aa).

Alpha-maltose 1-phosphate-binding residues include K252, Q312, and D347. D382 serves as the catalytic Nucleophile. N383 contributes to the alpha-maltose 1-phosphate binding site. E411 functions as the Proton donor in the catalytic mechanism. 521–522 (KY) provides a ligand contact to alpha-maltose 1-phosphate.

This sequence belongs to the glycosyl hydrolase 13 family. GlgE subfamily. In terms of assembly, homodimer.

The catalysed reaction is alpha-maltose 1-phosphate + [(1-&gt;4)-alpha-D-glucosyl](n) = [(1-&gt;4)-alpha-D-glucosyl](n+2) + phosphate. In terms of biological role, maltosyltransferase that uses maltose 1-phosphate (M1P) as the sugar donor to elongate linear or branched alpha-(1-&gt;4)-glucans. Is involved in a branched alpha-glucan biosynthetic pathway from trehalose, together with TreS, Mak and GlgB. The sequence is that of Alpha-1,4-glucan:maltose-1-phosphate maltosyltransferase from Corynebacterium pseudotuberculosis (strain 1002).